Here is a 426-residue protein sequence, read N- to C-terminus: Adenylosuccinate synthetase 2 (426 aa).

GTP is bound by residues 12-18 (GDEGKGK) and 40-42 (GHT). The active-site Proton acceptor is the D13. Mg(2+) is bound by residues D13 and G40. IMP-binding positions include 13-16 (DEGK), 38-41 (NAGH), R147, N223, T238, and R302. H41 functions as the Proton donor in the catalytic mechanism. 298 to 304 (TNTGRRR) provides a ligand contact to substrate. GTP-binding positions include R304, 330–332 (KLD), and 412–414 (GVG).

It belongs to the adenylosuccinate synthetase family. As to quaternary structure, homodimer. It depends on Mg(2+) as a cofactor.

It localises to the cytoplasm. It catalyses the reaction IMP + L-aspartate + GTP = N(6)-(1,2-dicarboxyethyl)-AMP + GDP + phosphate + 2 H(+). It functions in the pathway purine metabolism; AMP biosynthesis via de novo pathway; AMP from IMP: step 1/2. Its function is as follows. Plays an important role in the de novo pathway and in the salvage pathway of purine nucleotide biosynthesis. Catalyzes the first committed step in the biosynthesis of AMP from IMP. This is Adenylosuccinate synthetase 2 from Laccaria bicolor (strain S238N-H82 / ATCC MYA-4686) (Bicoloured deceiver).